A 103-amino-acid polypeptide reads, in one-letter code: Large ribosomal subunit protein bL21 (103 aa).

It belongs to the bacterial ribosomal protein bL21 family. As to quaternary structure, part of the 50S ribosomal subunit. Contacts protein L20.

Its function is as follows. This protein binds to 23S rRNA in the presence of protein L20. The sequence is that of Large ribosomal subunit protein bL21 from Polynucleobacter necessarius subsp. necessarius (strain STIR1).